The sequence spans 206 residues: Adenylyl-sulfate kinase (206 aa).

An ATP-binding site is contributed by 36-43 (GLSGSGKS). Ser110 (phosphoserine intermediate) is an active-site residue.

It belongs to the APS kinase family.

The catalysed reaction is adenosine 5'-phosphosulfate + ATP = 3'-phosphoadenylyl sulfate + ADP + H(+). The protein operates within sulfur metabolism; hydrogen sulfide biosynthesis; sulfite from sulfate: step 2/3. In terms of biological role, catalyzes the synthesis of activated sulfate. The polypeptide is Adenylyl-sulfate kinase (cysC) (Buchnera aphidicola subsp. Acyrthosiphon pisum (strain APS) (Acyrthosiphon pisum symbiotic bacterium)).